A 538-amino-acid polypeptide reads, in one-letter code: Chaperonin GroEL (538 aa).

ATP contacts are provided by residues 30–33 (TLGP), 87–91 (DGTTT), G415, 479–481 (DAA), and D495.

This sequence belongs to the chaperonin (HSP60) family. In terms of assembly, forms a cylinder of 14 subunits composed of two heptameric rings stacked back-to-back. Interacts with the co-chaperonin GroES.

The protein localises to the cytoplasm. The enzyme catalyses ATP + H2O + a folded polypeptide = ADP + phosphate + an unfolded polypeptide.. Its function is as follows. Together with its co-chaperonin GroES, plays an essential role in assisting protein folding. The GroEL-GroES system forms a nano-cage that allows encapsulation of the non-native substrate proteins and provides a physical environment optimized to promote and accelerate protein folding. The polypeptide is Chaperonin GroEL (Dictyoglomus thermophilum (strain ATCC 35947 / DSM 3960 / H-6-12)).